We begin with the raw amino-acid sequence, 309 residues long: Manganese-dependent inorganic pyrophosphatase (309 aa).

Mn(2+) is bound by residues His9, Asp13, Asp15, Asp75, His97, and Asp149.

In terms of assembly, homodimer. It depends on Mn(2+) as a cofactor.

The protein localises to the cytoplasm. It carries out the reaction diphosphate + H2O = 2 phosphate + H(+). This is Manganese-dependent inorganic pyrophosphatase (ppaC) from Bacillus subtilis (strain 168).